A 142-amino-acid chain; its full sequence is Hemoglobin cathodic subunit alpha (142 aa).

S1 carries the N-acetylserine modification. Residues 1–142 enclose the Globin domain; that stretch reads SLTAKDKALV…LSSTAADKYR (142 aa). H59 contributes to the O2 binding site. Position 88 (H88) interacts with heme b.

Belongs to the globin family. In terms of assembly, heterotetramer of two alpha chains and two beta chains.

Functionally, involved in oxygen transport from gills to the various peripheral tissues. The chain is Hemoglobin cathodic subunit alpha from Hoplosternum littorale (Hassar).